We begin with the raw amino-acid sequence, 189 residues long: Protein GrpE (189 aa).

Residues 1 to 13 show a composition bias toward polar residues; the sequence is MSENKQPEQNQDL. The tract at residues 1–35 is disordered; the sequence is MSENKQPEQNQDLTGEPSPEELEAAQAADEFDAMN.

The protein belongs to the GrpE family. As to quaternary structure, homodimer.

The protein resides in the cytoplasm. Functionally, participates actively in the response to hyperosmotic and heat shock by preventing the aggregation of stress-denatured proteins, in association with DnaK and GrpE. It is the nucleotide exchange factor for DnaK and may function as a thermosensor. Unfolded proteins bind initially to DnaJ; upon interaction with the DnaJ-bound protein, DnaK hydrolyzes its bound ATP, resulting in the formation of a stable complex. GrpE releases ADP from DnaK; ATP binding to DnaK triggers the release of the substrate protein, thus completing the reaction cycle. Several rounds of ATP-dependent interactions between DnaJ, DnaK and GrpE are required for fully efficient folding. The sequence is that of Protein GrpE from Polaromonas naphthalenivorans (strain CJ2).